The primary structure comprises 187 residues: Methylamine dehydrogenase light chain (187 aa).

Residues M1–Q57 constitute a signal peptide (tat-type signal). 6 disulfide bridges follow: C79–C144, C85–C117, C92–C177, C94–C142, C102–C133, and C134–C165. W113 carries the post-translational modification Tryptophylquinone. The segment at residues W113 to W164 is a cross-link (tryptophan tryptophylquinone (Trp-Trp)).

It belongs to the aromatic amine dehydrogenase light chain family. As to quaternary structure, heterotetramer of two light and two heavy chains. Requires tryptophan tryptophylquinone residue as cofactor. Post-translationally, predicted to be exported by the Tat system. The position of the signal peptide cleavage has not been experimentally proven. In terms of processing, tryptophan tryptophylquinone (TTQ) is formed by oxidation of the indole ring of a tryptophan to form tryptophylquinone followed by covalent cross-linking with another tryptophan residue.

It localises to the periplasm. It carries out the reaction 2 oxidized [amicyanin] + methylamine + H2O = 2 reduced [amicyanin] + formaldehyde + NH4(+) + 2 H(+). Its pathway is one-carbon metabolism; methylamine degradation; formaldehyde from methylamine: step 1/1. Methylamine dehydrogenase carries out the oxidation of methylamine. Electrons are passed from methylamine dehydrogenase to amicyanin. The protein is Methylamine dehydrogenase light chain (mauA) of Methylophilus methylotrophus (Bacterium W3A1).